The sequence spans 154 residues: Bacterial ferritin (154 aa).

A Ferritin-like diiron domain is found at 1-145; sequence MQGHPEVIDY…QQLGLIARMG (145 aa). The Fe(3+) site is built by glutamate 18, histidine 46, glutamate 47, glutamate 50, glutamate 51, histidine 54, glutamate 93, aspartate 129, and histidine 130.

It belongs to the bacterioferritin family. The bacterioferritin (BFR) complex is formed of 24 subunits (FtnA and BfrB) arranged as 12 homodimers. The holocomplex contains about 8.7% Fe and 8.0% phosphate. In vivo purifies with BfrB in varying ratios, depending on the O(2) content; as O(2) decreases FtnA content rises. Pure FtnA BFR complexes are not isolated in situ, although in a bfrB deletion some iron will accumulate in FtnA ferritin complexes. Upon crystallization forms homooligomers of 24 subunits, the BFR complex, arranged as 12 dimers, that are packed together to form an approximately spherical molecule with a central cavity, in which large amounts of iron can be deposited. The BFR shell has three- and four-fold pores; Fe(2+) may move in and out of the shell via the four-fold pores. Does not interact with Bfd.

It localises to the cytoplasm. It catalyses the reaction 4 Fe(2+) + O2 + 4 H(+) = 4 Fe(3+) + 2 H2O. The catalysed reaction is Fe(2+)(in) = Fe(2+)(out). Its function is as follows. Plays a role in catalase A (katA) expression; activity is required for optimal KatA activity and resistance to H(2)O(2). Iron-storage protein that is part of the heterooligomeric bacterioferritin (BFR) complex. The ferroxidase center binds Fe(2+), oxidizes it using dioxygen to Fe(3+), and participates in subsequent Fe(3+) oxide mineral core formation within the central cavity of the BFR protein shell. Can store up to 520 iron atoms per ferritin protein molecule. Iron release requires only the input of electrons from ferredoxin NADP reductase (FPR), does not require Bfd. Does not bind heme. The chain is Bacterial ferritin from Pseudomonas aeruginosa (strain ATCC 15692 / DSM 22644 / CIP 104116 / JCM 14847 / LMG 12228 / 1C / PRS 101 / PAO1).